The primary structure comprises 328 residues: Pancreas transcription factor 1 subunit alpha (328 aa).

A bHLH domain is found at Q163–L215. Disordered regions lie at residues R259–G278 and D305–S328.

Component of the pancreas transcription factor 1 complex (PTF1) which is composed of TCF3/p75, TCF12/p64 and PTF1A/p48. TCF3 is responsible for the nuclear import of the p48/p64 complex. Interacts with TCF3 and RBPSUH/RBP-Jkappa. In terms of tissue distribution, pancreas-specific (at protein level). Loss of expression is seen in ductal type pancreas cancers.

The protein resides in the nucleus. The protein localises to the cytoplasm. In terms of biological role, transcription factor implicated in the cell fate determination in various organs. Binds to the E-box consensus sequence 5'-CANNTG-3'. Plays a role in early and late pancreas development and differentiation. Important for determining whether cells allocated to the pancreatic buds continue towards pancreatic organogenesis or revert back to duodenal fates. May be involved in the maintenance of exocrine pancreas-specific gene expression including ELA1 and amylase. Required for the formation of pancreatic acinar and ductal cells. Plays an important role in cerebellar development. Directly regulated by FOXN4 and RORC during retinal development, FOXN4-PTF1A pathway plays a central role in directing the differentiation of retinal progenitors towards horizontal and amacrine fates. This is Pancreas transcription factor 1 subunit alpha (PTF1A) from Homo sapiens (Human).